Reading from the N-terminus, the 2907-residue chain is Fibrillin-2 (2907 aa).

Residues 1–28 (MGRRRRLCLQPYFVWLGCVALWAQGTDG) form the signal peptide. Residues 26–58 (TDGQPQPPPPKTLRPQPPPQQVRPAVAGSEGGF) are disordered. The propeptide occupies 29–77 (QPQPPPPKTLRPQPPPQQVRPAVAGSEGGFMGPEYRDEGAVAASRVRRR). A compositionally biased stretch (pro residues) spans 30–46 (PQPPPPKTLRPQPPPQQ). EGF-like domains lie at 111 to 142 (IVPICRNSCGDGFCSRPNMCTCSSGQISPTCG), 145 to 176 (SIQQCSVRCMNGGTCADDHCQCQKGYIGTYCG), and 176 to 208 (GQPVCENGCQNGGRCIGPNRCACVYGFTGPQCE). Disulfide bonds link C115–C124, C119–C130, C132–C141, C149–C159, C153–C164, C166–C175, C180–C190, C184–C196, and C198–C207. The interval 149-359 (CSVRCMNGGT…VTSTDGSRCI (211 aa)) is interaction with MFAP4. In terms of domain architecture, TB 1 spans 214 to 266 (GPCFTQVNNQMCQGQLTGIVCTKTLCCATIGRAWGHPCEMCPAQPQPCRRGFI). Positions 276–317 (DVDECQAIPGLCQGGNCINTVGSFECRCPAGHKQSETTQKCE) constitute an EGF-like 4; calcium-binding domain. 6 disulfide bridges follow: C280–C292, C287–C301, C303–C316, C322–C334, C329–C343, and C345–C358. S298 carries O-linked (Glc) serine glycosylation. Residues 318 to 359 (DIDECSVIPGVCETGDCSNTVGSYFCLCPRGFVTSTDGSRCI) form the EGF-like 5; calcium-binding domain. A glycan (O-linked (Glc) serine) is linked at S340. Residues 364–417 (GTCFSGLVNGRCAQELPGRMAKAQCCCEPGRCWSIGTIPEACPVRGSEEYRRLC) enclose the TB 2 domain. N-linked (GlcNAc...) asparagine glycosylation occurs at N485. In terms of domain architecture, EGF-like 6 spans 487–527 (TIDICKHHANLCLNGRCIPTVSSYRCECNMGYKQDANGDCI). 15 cysteine pairs are disulfide-bonded: C491/C503, C498/C512, C514/C526, C532/C542, C537/C551, C553/C566, C572/C584, C579/C593, C595/C608, C614/C625, C620/C634, C636/C649, C655/C666, C661/C675, and C677/C690. Residue S509 is glycosylated (O-linked (Glc) serine). Residues 528–567 (DVDECTSNPCSNGDCVNTPGSYYCKCHAGFQRTPTKQACI) enclose the EGF-like 7; calcium-binding domain. A glycan (O-linked (Glc) serine) is linked at S548. The region spanning 568-609 (DIDECIQNGVLCKNGRCVNTDGSFQCICNAGFELTTDGKNCV) is the EGF-like 8; calcium-binding domain. Residue S590 is glycosylated (O-linked (Glc) serine). The 41-residue stretch at 610–650 (DHDECTTTNMCLNGMCINEDGSFKCVCKPGFILAPNGRYCT) folds into the EGF-like 9; calcium-binding domain. An O-linked (Glc) serine glycan is attached at S631. In terms of domain architecture, EGF-like 10; calcium-binding spans 651 to 691 (DVDECQTPGICMNGHCINNEGSFRCDCPPGLAVGVDGRVCV). S672 carries an O-linked (Glc) serine glycan. The TB 3 domain maps to 697-749 (STCYGEIKKGVCVRPFPGAVTKSECCCANPDYGFGEPCQPCPAKNSAEFHGLC). The 42-residue stretch at 761–802 (DINECALDPDICANGICENLRGSYRCNCNSGYEPDASGRNCI) folds into the EGF-like 11; calcium-binding domain. 9 disulfide bridges follow: C765/C777, C772/C786, C788/C801, C807/C819, C814/C828, C830/C843, C849/C859, C854/C868, and C870/C883. In terms of domain architecture, EGF-like 12; calcium-binding spans 803-844 (DIDECLVNRLLCDNGLCRNTPGSYSCTCPPGYVFRTETETCE). The O-linked (Glc) serine glycan is linked to S825. The region spanning 845–883 (DVNECESNPCVNGACRNNLGSFHCECSPGSKLSSTGLIC) is the EGF-like 13; calcium-binding domain. An O-linked (Glc) serine glycan is attached at S865. One can recognise a TB 4 domain in the interval 889–940 (GTCWLNIQDNRCEVNINGATLKSECCATLGAAWGSPCERCELDAACPRGFAR). An EGF-like 14; calcium-binding domain is found at 948–989 (DVNECEVFPGVCPNGRCVNSKGSFHCECPEGLTLDGTGRVCL). 3 cysteine pairs are disulfide-bonded: C952–C964, C959–C973, and C975–C988. A glycan (O-linked (Glc) serine) is linked at S970. The 52-residue stretch at 994-1045 (EHCFLKWDEDECIHPVPGKFRMDACCCAVGAAWGTECEECPKPGTKEYETLC) folds into the TB 5 domain. In terms of domain architecture, EGF-like 15; calcium-binding spans 1066–1107 (DINECKAFPGMCTYGKCRNTIGSFKCRCNNGFALDMEERNCT). Cystine bridges form between C1070–C1082, C1077–C1091, C1093–C1106, C1112–C1124, C1119–C1133, C1135–C1149, C1155–C1167, C1162–C1176, C1178–C1191, C1197–C1209, C1204–C1218, C1220–C1233, C1239–C1250, C1246–C1259, C1261–C1274, C1280–C1292, C1287–C1301, C1303–C1316, C1322–C1334, C1329–C1343, C1345–C1358, C1364–C1377, C1371–C1386, C1388–C1399, C1405–C1418, C1412–C1427, C1429–C1440, C1446–C1458, C1453–C1467, C1469–C1482, C1488–C1499, C1494–C1508, C1510–C1523, C1529–C1540, C1535–C1549, and C1551–C1564. S1088 carries an O-linked (Glc) serine glycan. N1105 carries N-linked (GlcNAc...) asparagine glycosylation. The EGF-like 16; calcium-binding domain occupies 1108–1150 (DIDECRISPDLCGSGICVNTPGSFECECFEGYESGFMMMKNCM). In terms of domain architecture, EGF-like 17; calcium-binding spans 1151 to 1192 (DIDECERNPLLCRGGTCVNTEGSFQCDCPLGHELSPSREDCV). The O-linked (Glc) serine glycan is linked to S1173. The region spanning 1193 to 1234 (DINECSLSDNLCRNGKCVNMIGTYQCSCNPGYQATPDRQGCT) is the EGF-like 18; calcium-binding domain. T1215 is a glycosylation site (O-linked (Glc) threonine). In terms of domain architecture, EGF-like 19; calcium-binding spans 1235 to 1275 (DIDECMIMNGGCDTQCTNSEGSYECSCSEGYALMPDGRSCA). S1256 carries O-linked (Glc) serine glycosylation. Residues 1276 to 1317 (DIDECENNPDICDGGQCTNIPGEYRCLCYDGFMASMDMKTCI) enclose the EGF-like 20; calcium-binding domain. Positions 1318-1359 (DVNECDLNPNICMFGECENTKGSFICHCQLGYSVKKGTTGCT) constitute an EGF-like 21; calcium-binding domain. S1340 is a glycosylation site (O-linked (Glc) serine). In terms of domain architecture, EGF-like 22; calcium-binding spans 1360–1400 (DVDECEIGAHNCDMHASCLNVPGSFKCSCREGWVGNGIKCI). S1383 carries an O-linked (Glc) serine glycan. The EGF-like 23; calcium-binding domain maps to 1401–1441 (DLDECANGTHQCSINAQCVNTPGSYRCACSEGFTGDGFTCS). The N-linked (GlcNAc...) asparagine glycan is linked to N1407. The EGF-like 24; calcium-binding domain maps to 1442-1483 (DVDECAENTNLCENGQCLNVPGAYRCECEMGFTPASDSRSCQ). Positions 1484 to 1524 (DIDECSFQNICVFGTCNNLPGMFHCICDDGYELDRTGGNCT) constitute an EGF-like 25; calcium-binding domain. An N-linked (GlcNAc...) asparagine glycan is attached at N1522. The region spanning 1525 to 1565 (DIDECADPINCVNGLCVNTPGRYECNCPPDFQLNPTGVGCV) is the EGF-like 26; calcium-binding domain. A TB 6 domain is found at 1570-1626 (GNCYLKFGPRGDGSLSCNTEVGVGVSRSSCCCSLGKAWGNPCETCPPVNSTEYYTLC). N-linked (GlcNAc...) asparagine glycosylation occurs at N1618. The EGF-like 27; calcium-binding domain occupies 1643–1684 (DIDECQELPGLCQGGNCINTFGSFQCECPQGYYLSEETRICE). 6 disulfide bridges follow: C1647–C1659, C1654–C1668, C1670–C1683, C1689–C1701, C1696–C1710, and C1712–C1725. An O-linked (Glc) serine glycan is attached at S1665. In terms of domain architecture, EGF-like 28; calcium-binding spans 1685 to 1726 (DIDECFAHPGVCGPGTCYNTLGNYTCICPPEYMQVNGGHNCM). Residue N1707 is glycosylated (N-linked (GlcNAc...) asparagine). Residues 1728-2164 (MRKSFCYRSY…VPSLHDTRED (437 aa)) form an interaction with MFAP4 region. One can recognise a TB 7 domain in the interval 1731–1784 (SFCYRSYNGTTCENELPFNVTKRMCCCTYNVGKAWNKPCEPCPTPGTADFKTIC). N-linked (GlcNAc...) asparagine glycans are attached at residues N1738 and N1749. The 42-residue stretch at 1801-1842 (DIDECKEIPGICANGVCINQIGSFRCECPTGFSYNDLLLVCE) folds into the EGF-like 29; calcium-binding domain. Disulfide bonds link C1805-C1817, C1812-C1826, C1828-C1841, C1847-C1860, C1854-C1869, C1871-C1883, C1889-C1901, C1896-C1910, C1912-C1925, C1931-C1941, C1936-C1950, C1952-C1964, C1970-C1983, C1978-C1992, C1994-C2007, C2013-C2025, C2020-C2034, C2036-C2047, C2053-C2065, C2060-C2074, and C2076-C2089. Positions 1843–1884 (DIDECSNGDNLCQRNADCINSPGSYRCECAAGFKLSPNGACV) constitute an EGF-like 30; calcium-binding domain. O-linked (Glc) serine glycosylation is present at S1866. An EGF-like 31; calcium-binding domain is found at 1885-1926 (DRNECLEIPNVCSHGLCVDLQGSYQCICNNGFKASQDQTMCM). The EGF-like 32; calcium-binding domain occupies 1927–1965 (DVDECERHPCGNGTCKNTVGSYNCLCYPGFELTHNNDCL). N-linked (GlcNAc...) asparagine glycosylation is present at N1938. S1947 carries an O-linked (Glc) serine glycan. The EGF-like 33; calcium-binding domain occupies 1966 to 2008 (DIDECSSFFGQVCRNGRCFNEIGSFKCLCNEGYELTPDGKNCI). S1989 carries O-linked (Glc) serine glycosylation. The EGF-like 34; calcium-binding domain maps to 2009 to 2048 (DTNECVALPGSCSPGTCQNLEGSFRCICPPGYEVRSENCI). The EGF-like 35; calcium-binding domain maps to 2049–2090 (DINECDEDPNICLFGSCTNTPGGFQCICPPGFVLSDNGRRCF). Residues 2095-2148 (SFCFTNFENGKCSVPKAFNTTKAKCCCSKMPGEGWGDPCELCPKDDEVAFQDLC) enclose the TB 8 domain. N2113 carries an N-linked (GlcNAc...) asparagine glycan. Residues 2164–2205 (DVNECLESPGICSNGQCINTDGSFRCECPMGYNLDYTGVRCV) form the EGF-like 36; calcium-binding domain. 15 disulfide bridges follow: C2168–C2180, C2175–C2189, C2191–C2204, C2210–C2221, C2216–C2230, C2232–C2244, C2250–C2261, C2257–C2270, C2272–C2285, C2291–C2305, C2298–C2314, C2316–C2329, C2335–C2347, C2342–C2356, and C2358–C2371. A glycan (O-linked (Glc) serine) is linked at S2186. The EGF-like 37; calcium-binding domain maps to 2206–2245 (DTDECSIGNPCGNGTCTNVIGSFECTCNEGFEPGPMMNCE). An N-linked (GlcNAc...) asparagine glycan is attached at N2218. The 41-residue stretch at 2246-2286 (DINECAQNPLLCAFRCMNTFGSYECTCPVGYALREDQKMCK) folds into the EGF-like 38; calcium-binding domain. A glycan (O-linked (Glc) serine) is linked at S2267. The 44-residue stretch at 2287-2330 (DLDECAEGLHDCESRGMMCKNLIGTFMCICPPGMARRPDGEGCV) folds into the EGF-like 39; calcium-binding domain. Residues 2331-2372 (DENECRTKPGICENGRCVNIIGSYRCECNEGFQSSSSGTECL) enclose the EGF-like 40; calcium-binding domain. O-linked (Glc) serine glycosylation is present at S2353. Positions 2377-2430 (GLCFAEVLQTMCQMASSSRNLVTKSECCCDGGRGWGHQCELCPLPGTAQYKKIC) constitute a TB 9 domain. The EGF-like 41; calcium-binding domain maps to 2442 to 2483 (DIDECKVMPSLCTNGQCVNTMGSFRCFCKVGYTTDISGTACV). Disulfide bonds link C2446/C2458, C2453/C2467, C2469/C2482, C2488/C2499, C2495/C2508, C2510/C2523, C2529/C2540, C2536/C2549, C2551/C2562, C2568/C2581, C2575/C2590, C2592/C2605, C2611/C2621, C2617/C2630, C2632/C2645, C2651/C2662, C2657/C2671, C2673/C2686, C2692/C2703, C2699/C2712, and C2714/C2726. O-linked (Glc) serine glycosylation is present at S2464. In terms of domain architecture, EGF-like 42; calcium-binding spans 2484-2524 (DLDECSQSPKPCNFICKNTKGSYQCSCPRGYVLQEDGKTCK). S2505 carries O-linked (Glc) serine glycosylation. Residues 2525–2563 (DLDECQTKQHNCQFLCVNTLGGFTCKCPPGFTQHHTACI) enclose the EGF-like 43; calcium-binding domain. Positions 2564–2606 (DNNECGSQPSLCGAKGICQNTPGSFSCECQRGFSLDASGLNCE) constitute an EGF-like 44; calcium-binding domain. The O-linked (Glc) serine glycan is linked to S2587. Positions 2607 to 2646 (DVDECDGNHRCQHGCQNILGGYRCGCPQGYVQHYQWNQCV) constitute an EGF-like 45; calcium-binding domain. The EGF-like 46; calcium-binding domain maps to 2647–2687 (DENECSNPGACGSASCYNTLGSYKCACPSGFSFDQFSSACH). O-linked (Glc) serine glycosylation is present at S2668. An EGF-like 47; calcium-binding domain is found at 2688–2727 (DVNECSSSKNPCSYGCSNTEGGYLCGCPPGYFRVGQGHCV). The N-linked (GlcNAc...) asparagine glycan is linked to N2803.

Belongs to the fibrillin family. In terms of assembly, interacts with BMP2, BMP4, BMP7, BMP10 and GDF5. Interacts with MFAP2 and MFAP5. Interacts with ADAMTSL5. Interacts with MFAP4. Post-translationally, N-glycosylated. O-glycosylated on serine residues by POGLUT2 and POGLUT3. Widely expressed.

It localises to the secreted. The protein localises to the extracellular space. Its subcellular location is the extracellular matrix. In terms of biological role, fibrillins are structural components of 10-12 nm extracellular calcium-binding microfibrils, which occur either in association with elastin or in elastin-free bundles. Fibrillin-2-containing microfibrils regulate the early process of elastic fiber assembly. Regulates osteoblast maturation by controlling TGF-beta bioavailability and calibrating TGF-beta and BMP levels, respectively. Functionally, hormone secreted by trophoblasts that promotes trophoblast invasiveness. Has glucogenic activity: is able to increase plasma glucose levels. This is Fibrillin-2 from Mus musculus (Mouse).